The chain runs to 977 residues: MSAGPGCEPCTKRPRWDAAATSPPAASDARSFPGRQRRVLDSKDAPVQFRVPPSSSGCALGRAGQHRGSATSLVFKQKTITSWMDTKGIKTVESESLHSKENNNTREESMMSSVQKDNFYQHNMEKLENVSQLGFDKSPVEKGTQYLKQHQTAAMCKWQNEGPHSERLLESEPPAVTLVPEQFSNANVDQSSPKDDHSDTNSEESRDNQQFLTHVKLANAKQTMEDEQGREARSHQKCGKACHPAEACAGCQQEETDVVSESPLSDTGSEDVGTGLKNANRLNRQESSLGNSPPFEKESEPESPMDVDNSKNSCQDSEADEETSPGFDEQEDSSSAQTANKPSRFQPREADTELRKRSSAKGGEIRLHFQFEGGESRAGMNDVNAKRPGSTSSLNVECRNSKQHGRKDSKITDHFMRVPKAEDKRKEQCEMKHQRTERKIPKYIPPHLSPDKKWLGTPIEEMRRMPRCGIRLPPLRPSANHTVTIRVDLLRIGEVPKPFPTHFKDLWDNKHVKMPCSEQNLYPVEDENGERAAGSRWELIQTALLNRLTRPQNLKDAILKYNVAYSKKWDFTALIDFWDKVLEEAEAQHLYQSILPDMVKIALCLPNICTQPIPLLKQKMNHSITMSQEQIASLLANAFFCTFPRRNAKMKSEYSSYPDINFNRLFEGRSSRKPEKLKTLFCYFRRVTEKKPTGLVTFTRQSLEDFPEWERCEKLLTRLHVTYEGTIEGNGQGMLQVDFANRFVGGGVTSAGLVQEEIRFLINPELIVSRLFTEVLDHNECLIITGTEQYSEYTGYAETYRWARSHEDRSERDDWQRRTTEIVAIDALHFRRYLDQFVPEKIRRELNKAYCGFLRPGVSSENLSAVATGNWGCGAFGGDARLKALIQILAAAVAERDVVYFTFGDSELMRDIYSMHTFLTERKLTVGEVYKLLLRYYNEECRNCSTPGPDIKLYPFIYHAVESCTQTTNQPGQRTGA.

The disordered stretch occupies residues 1 to 69 (MSAGPGCEPC…LGRAGQHRGS (69 aa)). The segment at 1 to 457 (MSAGPGCEPC…LSPDKKWLGT (457 aa)) is A-domain. A Nuclear localization signal motif is present at residues 10–16 (CTKRPRW). The segment covering 17–29 (DAAATSPPAASDA) has biased composition (low complexity). Ser-69 is subject to Phosphoserine. The PIP-box (PCNA interacting peptide) signature appears at 77 to 84 (QKTITSWM). Ser-138 and Ser-198 each carry phosphoserine. A disordered region spans residues 184–407 (SNANVDQSSP…CRNSKQHGRK (224 aa)). Basic and acidic residues-rich tracts occupy residues 192–207 (SPKD…ESRD) and 223–234 (TMEDEQGREARS). Thr-200 is subject to Phosphothreonine. Phosphoserine occurs at positions 262, 265, 287, 292, 299, 303, and 317. The span at 280–291 (NRLNRQESSLGN) shows a compositional bias: polar residues. The segment covering 317-332 (SEADEETSPGFDEQED) has biased composition (acidic residues). Residues 333–343 (SSSAQTANKPS) are compositionally biased toward polar residues. At Lys-341 the chain carries N6-acetyllysine. A compositionally biased stretch (basic and acidic residues) spans 346–356 (QPREADTELRK). Position 449 is a phosphoserine (Ser-449). Residues 611 to 796 (QPIPLLKQKM…TEQYSEYTGY (186 aa)) are catalytic. 727–728 (IE) is a substrate binding site. The active site involves Asp-738. Residues Asn-741 and Gln-755 each coordinate substrate. Residues Glu-756 and Glu-757 contribute to the active site. Substrate is bound by residues Tyr-796 and 870–875 (NWGCGA).

Belongs to the poly(ADP-ribose) glycohydrolase family. Interacts with PCNA. Interacts with NUDT5.

It localises to the nucleus. The enzyme catalyses [(1''-&gt;2')-ADP-alpha-D-ribose](n) + H2O = [(1''-&gt;2')-ADP-alpha-D-ribose](n-1) + ADP-D-ribose. Its function is as follows. Poly(ADP-ribose) glycohydrolase that degrades poly(ADP-ribose) by hydrolyzing the ribose-ribose bonds present in poly(ADP-ribose). PARG acts both as an endo- and exoglycosidase, releasing poly(ADP-ribose) of different length as well as ADP-ribose monomers. It is however unable to cleave the ester bond between the terminal ADP-ribose and ADP-ribosylated residues, leaving proteins that are mono-ADP-ribosylated. Poly(ADP-ribose) is synthesized after DNA damage is only present transiently and is rapidly degraded by PARG. Required to prevent detrimental accumulation of poly(ADP-ribose) upon prolonged replicative stress, while it is not required for recovery from transient replicative stress. Responsible for the prevalence of mono-ADP-ribosylated proteins in cells, thanks to its ability to degrade poly(ADP-ribose) without cleaving the terminal protein-ribose bond. Required for retinoid acid-dependent gene transactivation, probably by removing poly(ADP-ribose) from histone demethylase KDM4D, allowing chromatin derepression at RAR-dependent gene promoters. Involved in the synthesis of ATP in the nucleus, together with PARP1, NMNAT1 and NUDT5. Nuclear ATP generation is required for extensive chromatin remodeling events that are energy-consuming. The protein is Poly(ADP-ribose) glycohydrolase of Bos taurus (Bovine).